Reading from the N-terminus, the 102-residue chain is Small ribosomal subunit protein uS10 (102 aa).

This sequence belongs to the universal ribosomal protein uS10 family. As to quaternary structure, part of the 30S ribosomal subunit.

Its function is as follows. Involved in the binding of tRNA to the ribosomes. This chain is Small ribosomal subunit protein uS10, found in Methanothrix thermoacetophila (strain DSM 6194 / JCM 14653 / NBRC 101360 / PT) (Methanosaeta thermophila).